A 162-amino-acid polypeptide reads, in one-letter code: Large ribosomal subunit protein uL30 (162 aa).

It belongs to the universal ribosomal protein uL30 family. In terms of assembly, part of the 50S ribosomal subunit.

The sequence is that of Large ribosomal subunit protein uL30 from Korarchaeum cryptofilum (strain OPF8).